The following is a 486-amino-acid chain: Ribosome biogenesis protein YTM1 (486 aa).

A ubiquitin-like (UBL) domain region spans residues 12–99 (RQLPINLFTR…ESQIDVEYVR (88 aa)). WD repeat units lie at residues 212-251 (GHTGPISSVIASSSGKEIVTGSWDGNINLYVLPDAEPTEH), 305-345 (GHTG…AGAL), 349-388 (PFDKSALCVDQWKMNGTLATGNMDRTICLWDTRQATSLIS), 392-432 (PTTS…TALF), and 454-486 (VLGERLLAVDWNGEVLVAGGEDGEVGIWRARGE). The tract at residues 249-299 (TEHQVPADPVSYLPGQGTKKRRKLEKDQEKAPIEGLTDGDATGEGGWRRAP) is disordered.

It belongs to the WD repeat WDR12/YTM1 family. As to quaternary structure, component of the NOP7 complex, composed of ERB1, NOP7 and YTM1. The complex is held together by ERB1, which interacts with NOP7 via its N-terminal domain and with YTM1 via a high-affinity interaction between the seven-bladed beta-propeller domains of the 2 proteins. The NOP7 complex associates with the 66S pre-ribosome. Interacts (via UBL domain) with MDN1 (via VWFA/MIDAS domain).

Its subcellular location is the nucleus. The protein resides in the nucleolus. It is found in the nucleoplasm. Its function is as follows. Component of the NOP7 complex, which is required for maturation of the 25S and 5.8S ribosomal RNAs and formation of the 60S ribosome. This is Ribosome biogenesis protein YTM1 from Cryptococcus neoformans var. neoformans serotype D (strain B-3501A) (Filobasidiella neoformans).